We begin with the raw amino-acid sequence, 436 residues long: Serine/threonine-protein kinase STK11 (436 aa).

At serine 31 the chain carries Phosphoserine. Lysine 44 and lysine 48 each carry N6-acetyllysine. The sufficient for interaction with SIRT1 stretch occupies residues 45–90; sequence LIGKYLMGDLLGEGSYGKVKEVLDSETLCRRAVKILKKKKLRRIPN. Positions 49-309 constitute a Protein kinase domain; the sequence is YLMGDLLGEG…IRQIRQHSWF (261 aa). ATP-binding positions include 55-63 and lysine 78; that span reads LGEGSYGKV. N6-acetyllysine occurs at positions 96 and 97. Aspartate 176 (proton acceptor) is an active-site residue. The residue at position 189 (threonine 189) is a Phosphothreonine; by autocatalysis. N6-acetyllysine occurs at positions 296 and 311. Position 325 is a phosphoserine (serine 325). Threonine 336 is subject to Phosphothreonine; by autocatalysis. A Phosphothreonine; by ATM and autocatalysis modification is found at threonine 366. A disordered region spans residues 397–421; it reads GTEPQLSSKVKPEGRPGAANPARKV. Serine 403 bears the Phosphoserine mark. Lysine 420 carries the post-translational modification N6-acetyllysine. Residue cysteine 422 is the site of S-palmitoyl cysteine attachment. Lysine 426 is subject to N6-acetyllysine. Position 431 is a phosphoserine; by autocatalysis, PKA, PKC/PRKCZ and RPS6KA1 (serine 431). At cysteine 433 the chain carries Cysteine methyl ester. Cysteine 433 carries S-farnesyl cysteine lipidation. Residue lysine 434 is modified to N6-acetyllysine. Positions 434-436 are cleaved as a propeptide — removed in mature form; it reads KQQ.

This sequence belongs to the protein kinase superfamily. CAMK Ser/Thr protein kinase family. LKB1 subfamily. In terms of assembly, catalytic component of a trimeric complex composed of STK11/LKB1, STRAD (STRADA or STRADB) and CAB39/MO25 (CAB39/MO25alpha or CAB39L/MO25beta): the complex tethers STK11/LKB1 in the cytoplasm and stimulates its catalytic activity. Found in a ternary complex composed of SMAD4, STK11/LKB1 and STK11IP. Interacts with NR4A1, p53/TP53, SMAD4, STK11IP and WDR6. Interacts with NISCH; this interaction may increase STK11 activity. Interacts with SIRT1; the interaction deacetylates STK11. Interacts with CDKN1A. Mg(2+) is required as a cofactor. The cofactor is Mn(2+). Phosphorylated by ATM at Thr-366 following ionizing radiation (IR). Phosphorylation at Ser-431 by RPS6KA1 and/or some PKA is required to inhibit cell growth. Phosphorylation at Ser-431 is also required during neuronal polarization to mediate phosphorylation of BRSK1 and BRSK2. Phosphorylation by PKC/PRKCZ at Ser-397 in isoform 2 promotes metformin (or peroxynitrite)-induced nuclear export of STK11 and activation of AMPK. UV radiation -induced phosphorylation at Thr-366 mediates CDKN1A degradation. In terms of processing, acetylated. Deacetylation at Lys-48 enhances cytoplasmic localization and kinase activity in vitro. As to expression, expressed in brain, heart, testis, skeletal muscle and spleen, and weakly in liver and kidney. Isoform 1 is expressed at highest levels in the brain. Isoform 2 is expressed at highest levels in the testis, primarily in postmitotic developing germ cells (at protein level).

It is found in the nucleus. It localises to the cytoplasm. The protein resides in the membrane. Its subcellular location is the mitochondrion. It carries out the reaction L-seryl-[protein] + ATP = O-phospho-L-seryl-[protein] + ADP + H(+). The catalysed reaction is L-threonyl-[protein] + ATP = O-phospho-L-threonyl-[protein] + ADP + H(+). With respect to regulation, activated by forming a complex with STRAD (STRADA or STRADB) and CAB39/MO25 (CAB39/MO25alpha or CAB39L/MO25beta): STRADA (or STRADB)-binding promotes a conformational change of STK11/LKB1 in an active conformation, which is stabilized by CAB39/MO25alpha (or CAB39L/MO25beta) interacting with the STK11/LKB1 activation loop. Sequestration in the nucleus by NR4A1 prevents it from phosphorylating and activating cytoplasmic AMPK. In terms of biological role, tumor suppressor serine/threonine-protein kinase that controls the activity of AMP-activated protein kinase (AMPK) family members, thereby playing a role in various processes such as cell metabolism, cell polarity, apoptosis and DNA damage response. Acts by phosphorylating the T-loop of AMPK family proteins, thus promoting their activity: phosphorylates PRKAA1, PRKAA2, BRSK1, BRSK2, MARK1, MARK2, MARK3, MARK4, NUAK1, NUAK2, SIK1, SIK2, SIK3 and SNRK but not MELK. Also phosphorylates non-AMPK family proteins such as STRADA, PTEN and possibly p53/TP53. Acts as a key upstream regulator of AMPK by mediating phosphorylation and activation of AMPK catalytic subunits PRKAA1 and PRKAA2 and thereby regulates processes including: inhibition of signaling pathways that promote cell growth and proliferation when energy levels are low, glucose homeostasis in liver, activation of autophagy when cells undergo nutrient deprivation, and B-cell differentiation in the germinal center in response to DNA damage. Also acts as a regulator of cellular polarity by remodeling the actin cytoskeleton. Required for cortical neuron polarization by mediating phosphorylation and activation of BRSK1 and BRSK2, leading to axon initiation and specification. Involved in DNA damage response: interacts with p53/TP53 and recruited to the CDKN1A/WAF1 promoter to participate in transcription activation. Able to phosphorylate p53/TP53; the relevance of such result in vivo is however unclear and phosphorylation may be indirect and mediated by downstream STK11/LKB1 kinase NUAK1. Also acts as a mediator of p53/TP53-dependent apoptosis via interaction with p53/TP53: translocates to the mitochondrion during apoptosis and regulates p53/TP53-dependent apoptosis pathways. Regulates UV radiation-induced DNA damage response mediated by CDKN1A. In association with NUAK1, phosphorylates CDKN1A in response to UV radiation and contributes to its degradation which is necessary for optimal DNA repair. Has a role in spermiogenesis. The polypeptide is Serine/threonine-protein kinase STK11 (Rattus norvegicus (Rat)).